Here is a 640-residue protein sequence, read N- to C-terminus: Probable Ufm1-specific protease (640 aa).

Catalysis depends on residues C467, D591, and H593.

It belongs to the peptidase C78 family.

Thiol protease which recognizes and hydrolyzes the peptide bond at the C-terminal Gly of ufm-1, a ubiquitin-like modifier protein bound to a number of target proteins. In Oryza sativa subsp. japonica (Rice), this protein is Probable Ufm1-specific protease.